Here is a 1427-residue protein sequence, read N- to C-terminus: MYEAARVTDPIDHTSALAGFLVGAVLGIALIAAVAFATFTCGFGVALLAGMMAGIGAQALLSIGESIGKMFSSQSGNIITGSPDVYVNSLSAAYATLSGVACSKHNPIPLVAQGSTNIFINGRPAARKDDKITCGATIGDGSHDTFFHGGTQTYLPVDDEVPPWLRTATDWAFTLAGLVGGLGGLLKASGGLSRAVLPCAAKFIGGYVLGEAFGRYVAGPAINKAIGGLFGNPIDVTTGRKILLAESETDYVIPSPLPVAIKRFYSSGIDYAGTLGRGWVLPWEIRLHARDGRLWYTDAQGRESGFPMLRAGQAAFSEADQRYLTRTPDGRYILHDLGERYYDFGQYDPESGRIAWVRRVEDQAGQWYQFERDSRGRVTEILTCGGLRAVLDYETVFGRLGTVTLVHEDERRLAVTYGYDENGQLASVTDANGAVVRQFAYTNGLMTSHMNALGFTSSYVWSKIEGEPRVVETHTSEGENWTFEYDVAGRQTRVRHADGRTAHWRFDAQSQIVEYTDLDGAFYRIKYDAVGMPVMLMLPGDRTVMFEYDDAGRIIAETDPLGRTTRTRYDGNSLRPVEVVGPDGGAWRVEYDQQGRVVSNQDSLGRENRYEYPKALTALPSAHFDALGGRKTLEWNSLGKLVGYTDCSGKTTRTSFDAFGRICSRENALGQRITYDVRPTGEPRRVTYPDGSSETFEYDAAGTLVRYIGLGGRVQELLRNARGQLIEAVDPAGRRVQYRYDVEGRLRELQQDHARYTFTYSAGGRLLTETRPDGILRRFEYGEAGELLGLDIVGAPDPHATGNRSVRTIRFERDRMGVLKVQRTPTEVTRYQHDKGDRLVKVERVPTPSGIALGIVPDAVEFEYDKGGRLVAEHGSNGSVIYTLDELDNVVSLGLPHDQTLQMLRYGSGHVHQIRFGDQVVADFERDDLHREVSRTQGRLTQRSGYDPLGRKVWQSAGIDPEMLGRGSGQLWRNYGYDGAGDLIETSDSLRGSTRFSYDPAGRLISRANPLDRKFEEFAWDAAGNLLDDAQRKSRGYVEGNRLLMWQDLRFEYDPFGNLATKRRGANQTQRFTYDGQDRLITVHTQDVRGVVETRFAYDPLGRRIAKTDTAFDLRGMKLRAETKRFVWEGLRLVQEVRETGVSSYVYSPDAPYSPVARADTVMAEALAATVIDSAKRAARIFHFHTDPVGAPQEVTDEAGEVAWAGQYAAWGKVEATNRGVTAARTDQPLRFAGQYADDSTGLHYNTFRFYDPDVGRFINQDPIGLNGGANVYHYAPNPVGWVDPWGLAGSYALGPYQISAPQLPAYNGQTVGTFYYVNDAGGLESKVFSSGGPTPYPNYANAGHVEGQSALFMRDNGISEGLVFHNNPEGTCGFCVNMTETLLPENAKMTVVPPEGAIPVKRGATGETKVFTGNSNSPKSPTKGGC.

2 consecutive transmembrane segments (helical) span residues 16–36 (ALAG…AVAF) and 43–63 (FGVA…LLSI). YD repeat units lie at residues 469–501 (RVVE…DGRT), 548–584 (YDDA…GPDG), 720–747 (NARG…GRLR), and 977–1008 (YDGA…ISRA). A C-terminal effector domain, has cytidine deaminase activity region spans residues 1264 to 1427 (IGLNGGANVY…SPKSPTKGGC (164 aa)). Zn(2+) is bound by residues H1345, C1373, and C1376. The disordered stretch occupies residues 1402–1427 (KRGATGETKVFTGNSNSPKSPTKGGC). The span at 1412-1421 (FTGNSNSPKS) shows a compositional bias: polar residues.

The protein belongs to the RHS/WapA nuclease family. The toxic domain forms a 1:1 complex with the DddI immunity protein.

The protein resides in the membrane. It carries out the reaction a 2'-deoxycytidine in double-stranded DNA + H2O + H(+) = a 2'-deoxyuridine in double-stranded DNA + NH4(+). Functionally, toxic component of a toxin-immunity protein module, which functions as a cellular contact-dependent growth inhibition (CDI) system. CDI modules allow bacteria to communicate with and inhibit the growth of closely related neighboring bacteria in a contact-dependent fashion. Bacteria that have this module inhibit or kill bacteria without it, giving them a growth advantage. Probably specifically inhibited by cognate immunity protein DddI. The C-terminal 163 residue fragment has double-stranded DNA cytidine deaminase activity; it does not deaminate ssDNA, ssRNA or dsRNA. Leads to C:G to T:A conversions in deaminated DNA. Preferentially deaminates 5'-TC-3' substrates. The chain is Double-stranded DNA deaminase toxin A from Burkholderia cenocepacia (strain H111).